The following is a 278-amino-acid chain: Large ribosomal subunit protein uL2 (278 aa).

The disordered stretch occupies residues 208 to 278; that stretch reads AGRSRWMGKR…LIIRHRKGRK (71 aa). Residues 209–219 show a composition bias toward basic residues; sequence GRSRWMGKRPQ. Over residues 258 to 270 the composition is skewed to basic and acidic residues; that stretch reads KTRDSKKASEKLI.

The protein belongs to the universal ribosomal protein uL2 family. In terms of assembly, part of the 50S ribosomal subunit. Forms a bridge to the 30S subunit in the 70S ribosome.

Functionally, one of the primary rRNA binding proteins. Required for association of the 30S and 50S subunits to form the 70S ribosome, for tRNA binding and peptide bond formation. It has been suggested to have peptidyltransferase activity; this is somewhat controversial. Makes several contacts with the 16S rRNA in the 70S ribosome. The sequence is that of Large ribosomal subunit protein uL2 from Lactobacillus delbrueckii subsp. bulgaricus (strain ATCC 11842 / DSM 20081 / BCRC 10696 / JCM 1002 / NBRC 13953 / NCIMB 11778 / NCTC 12712 / WDCM 00102 / Lb 14).